Consider the following 1163-residue polypeptide: Putative beta-glucuronidase (1163 aa).

The first 20 residues, 1–20 (MPRFLKYILGLFLISISAFG), serve as a signal peptide directing secretion.

It belongs to the glycosyl hydrolase 2 family.

The protein resides in the periplasm. It carries out the reaction a beta-D-glucuronoside + H2O = D-glucuronate + an alcohol. In terms of biological role, glycoside hydrolase involved in ulvan degradation. Ulvan is the main polysaccharide component of the Ulvales (green seaweed) cell wall. It is composed of disaccharide building blocks comprising 3-sulfated rhamnose (Rha3S) linked to D-glucuronic acid (GlcA), L-iduronic acid (IduA), or D-xylose (Xyl). The polypeptide is Putative beta-glucuronidase (Formosa agariphila (strain DSM 15362 / KCTC 12365 / LMG 23005 / KMM 3901 / M-2Alg 35-1)).